A 412-amino-acid polypeptide reads, in one-letter code: ORC1-type DNA replication protein 2 (412 aa).

ATP-binding positions include 61–65, Tyr-207, and Arg-219; that span reads VGKTA.

Belongs to the CDC6/cdc18 family.

Functionally, involved in regulation of DNA replication. This is ORC1-type DNA replication protein 2 (cdc6b) from Haloarcula marismortui (strain ATCC 43049 / DSM 3752 / JCM 8966 / VKM B-1809) (Halobacterium marismortui).